The sequence spans 103 residues: Nucleoid-associated protein Adeh_3636 (103 aa).

The protein belongs to the YbaB/EbfC family. Homodimer.

The protein resides in the cytoplasm. It localises to the nucleoid. Binds to DNA and alters its conformation. May be involved in regulation of gene expression, nucleoid organization and DNA protection. The sequence is that of Nucleoid-associated protein Adeh_3636 from Anaeromyxobacter dehalogenans (strain 2CP-C).